Consider the following 397-residue polypeptide: Riboflavin biosynthesis protein RibBA (397 aa).

The interval 1-199 (MFHRIEEALE…IEDLIAYRRH (199 aa)) is DHBP synthase. D-ribulose 5-phosphate is bound by residues 26–27 (RE), aspartate 31, 138–142 (RAGHT), and glutamate 162. Glutamate 27 lines the Mg(2+) pocket. Histidine 141 contacts Mg(2+). Residues 200–397 (HETLVTREAE…VNKLGHLLNL (198 aa)) are GTP cyclohydrolase II. GTP is bound at residue 250–254 (RVHSE). Zn(2+) is bound by residues cysteine 255, cysteine 266, and cysteine 268. GTP is bound by residues glutamine 271, 293 to 295 (EGR), and threonine 315. Residue aspartate 327 is the Proton acceptor; for GTP cyclohydrolase activity of the active site. The Nucleophile; for GTP cyclohydrolase activity role is filled by arginine 329. GTP is bound by residues threonine 350 and lysine 355.

It in the N-terminal section; belongs to the DHBP synthase family. This sequence in the C-terminal section; belongs to the GTP cyclohydrolase II family. Mg(2+) is required as a cofactor. The cofactor is Mn(2+). It depends on Zn(2+) as a cofactor.

It carries out the reaction D-ribulose 5-phosphate = (2S)-2-hydroxy-3-oxobutyl phosphate + formate + H(+). The enzyme catalyses GTP + 4 H2O = 2,5-diamino-6-hydroxy-4-(5-phosphoribosylamino)-pyrimidine + formate + 2 phosphate + 3 H(+). Its pathway is cofactor biosynthesis; riboflavin biosynthesis; 2-hydroxy-3-oxobutyl phosphate from D-ribulose 5-phosphate: step 1/1. It functions in the pathway cofactor biosynthesis; riboflavin biosynthesis; 5-amino-6-(D-ribitylamino)uracil from GTP: step 1/4. Its function is as follows. Catalyzes the conversion of D-ribulose 5-phosphate to formate and 3,4-dihydroxy-2-butanone 4-phosphate. Functionally, catalyzes the conversion of GTP to 2,5-diamino-6-ribosylamino-4(3H)-pyrimidinone 5'-phosphate (DARP), formate and pyrophosphate. In Bacillus cereus (strain ATCC 14579 / DSM 31 / CCUG 7414 / JCM 2152 / NBRC 15305 / NCIMB 9373 / NCTC 2599 / NRRL B-3711), this protein is Riboflavin biosynthesis protein RibBA.